Consider the following 81-residue polypeptide: ATP synthase subunit c, chloroplastic (81 aa).

2 helical membrane passes run 3-23 (PLISAASVIAAGLAVGLASIG) and 57-77 (LAFMEALTIYGLVVALALLFA).

The protein belongs to the ATPase C chain family. F-type ATPases have 2 components, F(1) - the catalytic core - and F(0) - the membrane proton channel. F(1) has five subunits: alpha(3), beta(3), gamma(1), delta(1), epsilon(1). F(0) has four main subunits: a(1), b(1), b'(1) and c(10-14). The alpha and beta chains form an alternating ring which encloses part of the gamma chain. F(1) is attached to F(0) by a central stalk formed by the gamma and epsilon chains, while a peripheral stalk is formed by the delta, b and b' chains.

Its subcellular location is the plastid. The protein resides in the chloroplast thylakoid membrane. F(1)F(0) ATP synthase produces ATP from ADP in the presence of a proton or sodium gradient. F-type ATPases consist of two structural domains, F(1) containing the extramembraneous catalytic core and F(0) containing the membrane proton channel, linked together by a central stalk and a peripheral stalk. During catalysis, ATP synthesis in the catalytic domain of F(1) is coupled via a rotary mechanism of the central stalk subunits to proton translocation. Its function is as follows. Key component of the F(0) channel; it plays a direct role in translocation across the membrane. A homomeric c-ring of between 10-14 subunits forms the central stalk rotor element with the F(1) delta and epsilon subunits. The polypeptide is ATP synthase subunit c, chloroplastic (Acorus calamus var. americanus (American sweet flag)).